Here is a 217-residue protein sequence, read N- to C-terminus: Growth hormone variant (217 aa).

Residues 1–26 (MAAGSRTSLLLAFGLLCLSWLQEGSA) form the signal peptide. 2 disulfides stabilise this stretch: Cys-79-Cys-191 and Cys-208-Cys-215. A Phosphoserine modification is found at Ser-132. Asn-166 carries N-linked (GlcNAc...) asparagine glycosylation. Position 176 is a phosphoserine (Ser-176).

Belongs to the somatotropin/prolactin family. Monomer, dimer, trimer, tetramer and pentamer, disulfide-linked or non-covalently associated, in homomeric and heteromeric combinations. Can also form a complex either with GHBP or with the alpha2-macroglobulin complex. Expressed in the placenta.

It localises to the secreted. In terms of biological role, plays an important role in growth control. Its major role in stimulating body growth is to stimulate the liver and other tissues to secrete IGF1. It stimulates both the differentiation and proliferation of myoblasts. It also stimulates amino acid uptake and protein synthesis in muscle and other tissues. This chain is Growth hormone variant (GH2), found in Homo sapiens (Human).